Here is a 187-residue protein sequence, read N- to C-terminus: Large ribosomal subunit protein bL17 (187 aa).

It belongs to the bacterial ribosomal protein bL17 family. As to quaternary structure, part of the 50S ribosomal subunit. Contacts protein L32.

In Rhodococcus opacus (strain B4), this protein is Large ribosomal subunit protein bL17.